The primary structure comprises 398 residues: Neuroplastin (398 aa).

Positions 1-28 (MSGSSLPSALALSLLLVSGSLLPGPGAA) are cleaved as a signal peptide. Ig-like domains lie at 29 to 134 (QNAG…PSIT), 148 to 235 (PRIV…IEVK), and 238 to 329 (PDIT…SVVT). At 29-339 (QNAGFVKSPM…VLRVRSHLAP (311 aa)) the chain is on the extracellular side. Residues cysteine 52 and cysteine 116 are joined by a disulfide bond. A narpin; mediates binding with FGFR1 and has antidepressant-like activity region spans residues 149-161 (RIVTSEEVIIRDS). Cysteine 170 and cysteine 218 are oxidised to a cystine. 6 N-linked (GlcNAc...) asparagine glycosylation sites follow: asparagine 171, asparagine 197, asparagine 229, asparagine 284, asparagine 296, and asparagine 317. An intrachain disulfide couples cysteine 259 to cysteine 316. The chain crosses the membrane as a helical span at residues 340–360 (LWPFLGILAEIIILVVIIVVY). Over 361–398 (EKRKRPDEVPDDDEPAGPMKTNSTNNHKDKNLRQRNTN) the chain is Cytoplasmic. Residues 365–398 (RPDEVPDDDEPAGPMKTNSTNNHKDKNLRQRNTN) are disordered.

Interacts with ATP2B1; this interaction stabilizes ATP2B1 and increases ATPase activity; this interaction controls T cell calcium homeostasis following T cell activation. Interacts with XKR8; promoting its localization at the cell membrane. As to expression, isoform 1 is ubiquitously expressed. Isoform 2 is expressed in brain cortex and cerebellum (at protein level).

The protein resides in the cell membrane. Its subcellular location is the postsynaptic density. Functionally, probable homophilic and heterophilic cell adhesion molecule involved in long term potentiation at hippocampal excitatory synapses through activation of p38MAPK. May also regulate neurite outgrowth by activating the FGFR1 signaling pathway. May play a role in synaptic plasticity. Also acts as a chaperone for ATP2B1; stabilizes ATP2B1 and increases its ATPase activity. Promotes localization of XKR8 at the cell membrane. This is Neuroplastin (NPTN) from Homo sapiens (Human).